The chain runs to 331 residues: Aromatic 2-oxoacid reductase (331 aa).

Residues 154-155 (RI), Asp-175, 205-206 (AP), Asn-211, 232-234 (AAR), and Asp-258 contribute to the NAD(+) site. Residue Arg-234 is part of the active site. Residue Glu-263 is part of the active site. Catalysis depends on His-295, which acts as the Proton donor.

It belongs to the D-isomer specific 2-hydroxyacid dehydrogenase family.

The catalysed reaction is (R)-3-phenyllactate + NAD(+) = 3-phenylpyruvate + NADH + H(+). The enzyme catalyses (2R)-2-hydroxy-3-(4-hydroxyphenyl)propanoate + NAD(+) = 3-(4-hydroxyphenyl)pyruvate + NADH + H(+). It carries out the reaction 3-(indol-3-yl)lactate + NAD(+) = indole-3-pyruvate + NADH + H(+). It functions in the pathway amino-acid degradation. Functionally, essential for the reductive metabolism of L-phenylalanine, L-tyrosine and L-tryptophan. Catalyzes the conversion of phenylpyruvic acid to phenyllactic acid, 4-hydroxy-phenylpyruvic acid to 4-hydroxy-phenyllactic acid, and indolepyruvic acid to indolelactic acid. The polypeptide is Aromatic 2-oxoacid reductase (Clostridium sporogenes (strain ATCC 7955 / DSM 767 / NBRC 16411 / NCIMB 8053 / NCTC 8594 / PA 3679)).